Consider the following 534-residue polypeptide: Calcium uptake protein 1 homolog, mitochondrial (534 aa).

Residues 1 to 32 (MLHCSFLRVIPIKNASKRLIIVRSLTSAPAKT) constitute a mitochondrion transit peptide. The disordered stretch occupies residues 131-150 (PEASQKEEVTESNGEVEEVK). EF-hand domains follow at residues 271 to 306 (TSHADFALAFKIFDVDGNGALDKEEFTKVQQLIMSQ), 338 to 359 (KDGKGSLSSEKFIEFQERLQHD), and 466 to 501 (LSDHVVDVVITLFDDNLDGKLSHEEMVAVMRRRMRR). Ca(2+) is bound by residues Asp284, Asp286, Asn288, and Glu295.

This sequence belongs to the MICU1 family. MICU1 subfamily. Expressed at low levels in PLM touch receptor neurons, germ cells, epidermis, and muscles.

It localises to the mitochondrion intermembrane space. The protein localises to the mitochondrion inner membrane. Its function is as follows. Calcium sensor of the mitochondrial calcium uniporter (mcu-1) channel, which senses calcium level via its EF-hand domains. At low calcium levels, micu-1 occludes the pore of the mcu-1 channel, preventing mitochondrial calcium uptake. At higher calcium levels, calcium-binding to micu-1 induces a conformational change that weakens mcu-1-micu-1 interactions and moves micu-1 away from the pore, allowing calcium permeation through the mcu-1 channel. Also required to protect against manganese toxicity by preventing manganese uptake by mcu-1. Modulates the activity of the mitochondrial calcium uniporter protein mcu-1 depending on the level of intracellular calcium in PLM touch receptor neurons following axonal injury. This is Calcium uptake protein 1 homolog, mitochondrial from Caenorhabditis elegans.